The sequence spans 366 residues: Alcohol dehydrogenase (366 aa).

Zn(2+) contacts are provided by C41, H62, E63, and D167.

It belongs to the zinc-containing alcohol dehydrogenase family. In terms of assembly, homotetramer. Zn(2+) serves as cofactor.

The catalysed reaction is a primary alcohol + NAD(+) = an aldehyde + NADH + H(+). The enzyme catalyses a secondary alcohol + NAD(+) = a ketone + NADH + H(+). It catalyses the reaction (R,R)-butane-2,3-diol + NAD(+) = (R)-acetoin + NADH + H(+). It carries out the reaction an aldehyde + NAD(+) + H2O = a carboxylate + NADH + 2 H(+). Multifunctional alcohol dehydrogenase exhibiting NAD(+)-dependent dehydrogenase activities for 2,3-butanediol, ethanol and acetaldehyde, and reductase activities for acetoin (NADH-dependent), and diacetyl and acetaldehyde (independently of whether NADH or NADPH is the reductant). The rate of oxidation of 2,3-butanediol is much higher than for the oxidation of ethanol. Has acetaldehyde dehydrogenase activity leading to acetate formation. May function in the release of excess reducing power in the absence of exogenous hydrogen acceptors such as oxygen. The protein is Alcohol dehydrogenase (adh) of Cupriavidus necator (Alcaligenes eutrophus).